A 247-amino-acid chain; its full sequence is UDP-N-acetyl-D-mannosaminuronic acid transferase (247 aa).

It belongs to the glycosyltransferase 26 family.

The catalysed reaction is UDP-N-acetyl-alpha-D-mannosaminouronate + N-acetyl-alpha-D-glucosaminyl-di-trans,octa-cis-undecaprenyl diphosphate = beta-D-ManNAcA-(1-&gt;4)-alpha-D-GlcNAc-di-trans,octa-cis-undecaprenyl diphosphate + UDP + H(+). It functions in the pathway bacterial outer membrane biogenesis; enterobacterial common antigen biosynthesis. Catalyzes the synthesis of Und-PP-GlcNAc-ManNAcA (Lipid II), the second lipid-linked intermediate involved in enterobacterial common antigen (ECA) synthesis. The sequence is that of UDP-N-acetyl-D-mannosaminuronic acid transferase from Enterobacter sp. (strain 638).